The primary structure comprises 336 residues: UDP-3-O-acylglucosamine N-acyltransferase (336 aa).

His237 (proton acceptor) is an active-site residue.

This sequence belongs to the transferase hexapeptide repeat family. LpxD subfamily. In terms of assembly, homotrimer.

It catalyses the reaction a UDP-3-O-[(3R)-3-hydroxyacyl]-alpha-D-glucosamine + a (3R)-hydroxyacyl-[ACP] = a UDP-2-N,3-O-bis[(3R)-3-hydroxyacyl]-alpha-D-glucosamine + holo-[ACP] + H(+). It participates in bacterial outer membrane biogenesis; LPS lipid A biosynthesis. Functionally, catalyzes the N-acylation of UDP-3-O-acylglucosamine using 3-hydroxyacyl-ACP as the acyl donor. Is involved in the biosynthesis of lipid A, a phosphorylated glycolipid that anchors the lipopolysaccharide to the outer membrane of the cell. This Alcanivorax borkumensis (strain ATCC 700651 / DSM 11573 / NCIMB 13689 / SK2) protein is UDP-3-O-acylglucosamine N-acyltransferase.